The primary structure comprises 31 residues: Photosystem II reaction center protein T (31 aa).

The helical transmembrane segment at 3–23 (SVAYILVLTMTLAVLFFAIAF) threads the bilayer.

The protein belongs to the PsbT family. PSII is composed of 1 copy each of membrane proteins PsbA, PsbB, PsbC, PsbD, PsbE, PsbF, PsbH, PsbI, PsbJ, PsbK, PsbL, PsbM, PsbT, PsbX, PsbY, PsbZ, Psb30/Ycf12, peripheral proteins PsbO, CyanoQ (PsbQ), PsbU, PsbV and a large number of cofactors. It forms dimeric complexes.

Its subcellular location is the cellular thylakoid membrane. In terms of biological role, found at the monomer-monomer interface of the photosystem II (PS II) dimer, plays a role in assembly and dimerization of PSII. PSII is a light-driven water plastoquinone oxidoreductase, using light energy to abstract electrons from H(2)O, generating a proton gradient subsequently used for ATP formation. The polypeptide is Photosystem II reaction center protein T (Rippkaea orientalis (strain PCC 8801 / RF-1) (Cyanothece sp. (strain PCC 8801))).